Consider the following 449-residue polypeptide: MARRARRPRGRFYAFRRGRWHNLKRLRRRYKFRHRRRQRYRRRAFRKAFHNPRPGTYSVRLPNPQSTMTIRFQGIIFLTEGLILPKNSTAGGYADHLYGARVAKISVNLKEFLLASMNLTYVSKIGGPIAGELIADGSQSQAAQNWPNCWLPLDNNVPSATPSAWWRWALMMMQPTDSCRFFNHPKQMTLQDMGRMFGGWHLFRHIETRFQLLATKNEGSFSPVASLLSQGEYLTRRDDVKYSSDHQNRWRKGEQPMTGGIAYATGKMRPDEQQYPAMPPDPPIITATTAQGTQVRCMNSTQAWWSWDTYMSFATLTALGAQWSFPPGQRSVSRRSFNHHKARGAGDPKGQRWHTLVPLGTETITDSYMSAPASELDTNFFTLYVAQGTNKSQQYKFGTATYALKEPVMKSDAWAVVRVQSVWQLGNRQRPYPWDVNWANSTMYWGSQP.

The tract at residues 1 to 43 is DNA-binding; the sequence is MARRARRPRGRFYAFRRGRWHNLKRLRRRYKFRHRRRQRYRRR. The tract at residues 6–47 is nuclear localization signals; that stretch reads RRPRGRFYAFRRGRWHNLKRLRRRYKFRHRRRQRYRRRAFRK.

This sequence belongs to the gyrovirus capsid protein family. As to quaternary structure, homomultimer (Potential). Interacts with Rep; this interaction relocates Rep into the nucleus.

The protein localises to the host nucleus. The protein resides in the virion. Self-assembles to form the virion icosahedral capsid with a T=1 symmetry. This very small capsid (25 nm in diameter) allows the virus to be very stable in the environment and resistant to some disinfectants, including detergents. Essential for the initial attachment to host receptors. After attachment, the virus is endocytosed and traffics to the nucleus. The capsid protein binds and transports the viral genome and Rep across the nuclear envelope. This is Capsid protein (VP1) from Chicken anemia virus (isolate USA CIA-1) (CAV).